A 174-amino-acid polypeptide reads, in one-letter code: MNYFALFDLPRKFNIDKKLLSQNFYKLQLKFHPDLFINDSESKKKIILEKSIQINKGYKTLKNFLNRAIYFLCLNGYEVKKETLLLKNNDFLIRYFSLYEQLDNLKENNFNKKELNNLEQIIQKKIIYCKKKIELEFEKTRYKKVIKIISELLFFEKIKDVLKKEYNIYLRQIN.

Residues 2–74 form the J domain; sequence NYFALFDLPR…LNRAIYFLCL (73 aa).

The protein belongs to the HscB family. In terms of assembly, interacts with HscA and stimulates its ATPase activity. Interacts with IscU.

Its function is as follows. Co-chaperone involved in the maturation of iron-sulfur cluster-containing proteins. Seems to help targeting proteins to be folded toward HscA. This Buchnera aphidicola subsp. Acyrthosiphon pisum (strain 5A) protein is Co-chaperone protein HscB.